A 147-amino-acid chain; its full sequence is Large ribosomal subunit protein uL13 (147 aa).

Belongs to the universal ribosomal protein uL13 family. Part of the 50S ribosomal subunit.

This protein is one of the early assembly proteins of the 50S ribosomal subunit, although it is not seen to bind rRNA by itself. It is important during the early stages of 50S assembly. This is Large ribosomal subunit protein uL13 from Mycolicibacterium paratuberculosis (strain ATCC BAA-968 / K-10) (Mycobacterium paratuberculosis).